Reading from the N-terminus, the 199-residue chain is dCTP deaminase, dUMP-forming (199 aa).

DCTP is bound by residues 101–106, aspartate 119, 127–129, glutamine 148, tyrosine 162, and glutamine 174; these read KSSLGR and TLE. The active-site Proton donor/acceptor is glutamate 129. The disordered stretch occupies residues 163-199; sequence GSAAAGSKYQGQRGPTPSRSYLNFPLPSDAVDAVESR. The segment covering 171 to 183 has biased composition (polar residues); it reads YQGQRGPTPSRSY.

The protein belongs to the dCTP deaminase family. Homotrimer.

The catalysed reaction is dCTP + 2 H2O = dUMP + NH4(+) + diphosphate. The protein operates within pyrimidine metabolism; dUMP biosynthesis; dUMP from dCTP: step 1/1. In terms of biological role, bifunctional enzyme that catalyzes both the deamination of dCTP to dUTP and the hydrolysis of dUTP to dUMP without releasing the toxic dUTP intermediate. In Nocardia farcinica (strain IFM 10152), this protein is dCTP deaminase, dUMP-forming.